Here is a 646-residue protein sequence, read N- to C-terminus: Sulfate transporter 3.2 (646 aa).

Residues 1 to 76 (MSSKRASQYH…GYSLEYLKSD (76 aa)) lie on the Cytoplasmic side of the membrane. The chain crosses the membrane as a helical span at residues 77-97 (VISGITIASLAIPQGISYAQL). Residues 98 to 99 (AN) lie on the Extracellular side of the membrane. A helical transmembrane segment spans residues 100 to 120 (LPPILGLYSSLVPPLVYAIMG). The Cytoplasmic segment spans residues 121 to 124 (SSRD). The helical transmembrane segment at 125–145 (LAVGTVAVASLLTAAMLGKEV) threads the bilayer. Topologically, residues 146 to 154 (NAVVNPKLY) are extracellular. Residues 155–175 (LHLAFTATFFAGLMQTCLGLL) form a helical membrane-spanning segment. Arg-176 is a topological domain (cytoplasmic). Residues 177–197 (LGFVVEILSHAAIVGFMGGAA) form a helical membrane-spanning segment. At 198–235 (TVVCLQQLKGLLGLHHFTHSTDIVTVLRSIFSQSHMWR) the chain is on the extracellular side. The chain crosses the membrane as a helical span at residues 236–256 (WESGVLGCCFLIFLLTTKYIS). Residues 257-262 (KKRPKL) are Cytoplasmic-facing. A helical membrane pass occupies residues 263-283 (FWISAMSPLVSVIFGTIFLYF). At 284–315 (LHDQFHGIQFIGELKKGINPPSITHLVFTPPY) the chain is on the extracellular side. A helical transmembrane segment spans residues 316–336 (VMLALKVGIITGVIALAEGIA). Residues 337-354 (VGRSFAMYKNYNIDGNKE) are Cytoplasmic-facing. The chain crosses the membrane as a helical span at residues 355–375 (MIAFGMMNILGSFSSCYLTTG). Topologically, residues 376-390 (PFSRSAVNYNAGCKT) are extracellular. A run of 2 helical transmembrane segments spans residues 391–411 (ALSN…LTPL) and 412–432 (FFYT…LGLV). At 433-447 (DYEAAIHLWKLDKFD) the chain is on the extracellular side. Residues 448–468 (FFVCLSAYLGVVFGTIEIGLI) traverse the membrane as a helical segment. Residues 469-646 (LSVGISVMRL…DSPVPEFNNV (178 aa)) lie on the Cytoplasmic side of the membrane. One can recognise an STAS domain in the interval 504–627 (HYPQAITRSS…LTVAEAVAAC (124 aa)).

The protein belongs to the SLC26A/SulP transporter (TC 2.A.53) family. As to expression, expressed only in leaves.

The protein resides in the membrane. H(+)/sulfate cotransporter that may play a role in the regulation of sulfate assimilation. This Arabidopsis thaliana (Mouse-ear cress) protein is Sulfate transporter 3.2 (SULTR3;2).